Consider the following 932-residue polypeptide: MDGYNQQQQQQQQQQQQHQMNLGSSGGILHSPQQQQQQQQQQQQQQQQPMNGSNNQLLGISNGGFGTMLQQSASLPINIQGSNSFSTFTPLSADDSNLKKRKIKNEDGTYSEIPYSPNSLVGSNGGLDSSFLMLQQQLQDQQQQIAQFNSSVNSPSFSLNSSQVNNNNNNNNNINNNNNSNNNINNNNSNNNINNNNNNNNNNNNNINNNNINNNNNYNNNNNNNNHNHLQTTTTTTTNNGLTINANNTPSQLSSSSLYPGIIPQISITNTQSGYTPRSISPNPSPNLSPTNSPIQSPHLPTDNYLMIGSENENSDPPSPMTQYNENPPFTWTDYKSEPWYTTFNTNGDEMPVPLLNIMASKGFSYIGGQWIYCRRNHFQLDITAVYPKLFQETQYGHNGVTLSNSSSSVDPTQTPSYMLISGVKTPINGLTLTIKGIKNRADMSQQESEVELFQTNSKREKQGEHAPKPVAIQFGSLVSIQRLHFRKATLNNARRHGQPNPHQEFNQLVVSLYGRCMGQEYCIVSYVSPALIVRTATQVTPPGDLSPVHTPDYAGTSSNNGGGSNNMNCFGPTISNIDFSTMNIVSPGHSPTSPRPLSQLTSQGQTNILRLTQNHNNNNNNNNNNNNNNNNNNNNNNNNNINNNNNSNNNSLGNINNNNSNMLTSSSLLNGRINCFNNNINNNNNNQHNNNNQHNNNNNHHNINNQHNNQNNNNNNNNNNKCHWNSGDTEKSIVYNGKVGINVENPAYALSVQGTIYASEGVYHPSDLRIKYDLKSIDSKSNLDNVNRMKLYDYKYNPQWTHMNGRDPYLDNCDRGVIAQDLQRILPNAVRTIGNKNVNGQEIENLLVIKNEALVMETIGATQELSKQMDEMKLKLITYESKLKNLKKKSKNQTILLIIFMITFLLVALYMYKPSTHHSHHRRHNFDNNDN.

2 stretches are compositionally biased toward low complexity: residues 1–19 (MDGY…QQHQ) and 33–48 (QQQQ…QQQQ). Disordered stretches follow at residues 1 to 63 (MDGY…ISNG), 152 to 256 (VNSP…LSSS), 269 to 328 (TNTQ…NENP), 540 to 568 (VTPP…SNNM), 582 to 601 (TMNI…LSQL), 613 to 660 (TQNH…NNNN), and 680 to 726 (NINN…CHWN). Residues 49–59 (PMNGSNNQLLG) show a composition bias toward polar residues. Positions 127 to 154 (LDSSFLMLQQQLQDQQQQIAQFNSSVNS) form a coiled coil. Low complexity-rich tracts occupy residues 152–249 (VNSP…ANNT) and 277–294 (PRSI…TNSP). Positions 286–546 (PNLSPTNSPI…ATQVTPPGDL (261 aa)) form a DNA-binding region, NDT80. A compositionally biased stretch (polar residues) spans 311–328 (ENENSDPPSPMTQYNENP). Low complexity-rich tracts occupy residues 615–660 (NHNN…NNNN) and 680–721 (NINN…NNNN). Positions 767 to 877 (SDLRIKYDLK…KQMDEMKLKL (111 aa)) constitute a Peptidase S74 domain. Residues 863 to 895 (TQELSKQMDEMKLKLITYESKLKNLKKKSKNQT) are a coiled coil. The chain crosses the membrane as a helical span at residues 895–915 (TILLIIFMITFLLVALYMYKP).

Its subcellular location is the membrane. Its function is as follows. Transcription factor which acts as a key regulator of pstA (prestalk-A) cells differentiation. Essential for ecmA-specific gene expression. The polypeptide is Myelin gene regulatory factor-like A (mrfA) (Dictyostelium discoideum (Social amoeba)).